We begin with the raw amino-acid sequence, 421 residues long: Forkhead box protein J1 (421 aa).

Disordered stretches follow at residues 1–34 and 48–116; these read MAESWLRLSGAGPAEEAGPEGGLEEPDALDDSLT and KAPA…DYAT. Low complexity predominate over residues 66 to 80; that stretch reads PGSAAPGSPLAADPA. The span at 90-99 shows a compositional bias: polar residues; that stretch reads KPTSSCTSRS. A DNA-binding region (fork-head) is located at residues 120-210; it reads VKPPYSYATL…YAERLLSGAF (91 aa). The interval 261-302 is disordered; that stretch reads AGWGAGEGRLGHKRKQPLPKRVAKVPRPPSTLLPTPEEQGEL. Residues 271–284 are compositionally biased toward basic residues; it reads GHKRKQPLPKRVAK.

It belongs to the FOXJ1 family. Testis, oviduct, lung and brain cortex.

Its subcellular location is the nucleus. Transcription factor specifically required for the formation of motile cilia. Acts by activating transcription of genes that mediate assembly of motile cilia, such as CFAP157. Binds the DNA consensus sequences 5'-HWDTGTTTGTTTA-3' or 5'-KTTTGTTGTTKTW-3' (where H is not G, W is A or T, D is not C, and K is G or T). Activates the transcription of a variety of ciliary proteins in the developing brain and lung. The sequence is that of Forkhead box protein J1 from Homo sapiens (Human).